Consider the following 403-residue polypeptide: MANTFMNSPRFYFTSESVSEGHPDKMCDQISDAILDAFLSHDPKARVAVETATTTGLIVVLGEVTYERGYIPIEEIVRRTVKEIGYTSAEYGFDADTCGVMVAIHGQSPDIAMGVDKALEAKIGAMADDVEAVGAGDQGMMFGFACDETPELMPASIALAHRLIRRLERVRKDGTLPYLRPDAKSQVTVEYSFGKPVRVDTVLISSQHAPDITQDQIRADLIEHVIKTEIPEAWLDSQTKIFINPTGRFVIGGPMGDSGLTGRKIIVDTYGGVARHGGGAFSGKDPSKVDRSAAYACRWVAKNIVAAGLARRVELQVSYAIGVARPLSLSVETFGTAAVPDEVILKAVNEVFDLRPGAIIRDLDLRRPIYRKTAAGGHFGRTDIDLPWERTNRVEELRRAAGL.

Histidine 22 is an ATP binding site. Aspartate 24 contributes to the Mg(2+) binding site. Glutamate 50 contacts K(+). Glutamate 63 and glutamine 107 together coordinate L-methionine. The tract at residues 107 to 117 (QSPDIAMGVDK) is flexible loop. Residues 182 to 184 (DAK), 248 to 249 (RF), aspartate 257, 263 to 264 (RK), alanine 280, and lysine 284 contribute to the ATP site. Position 257 (aspartate 257) interacts with L-methionine. Lysine 288 is a binding site for L-methionine.

Belongs to the AdoMet synthase family. As to quaternary structure, homotetramer; dimer of dimers. Mg(2+) is required as a cofactor. Requires K(+) as cofactor.

It localises to the cytoplasm. It carries out the reaction L-methionine + ATP + H2O = S-adenosyl-L-methionine + phosphate + diphosphate. Its pathway is amino-acid biosynthesis; S-adenosyl-L-methionine biosynthesis; S-adenosyl-L-methionine from L-methionine: step 1/1. In terms of biological role, catalyzes the formation of S-adenosylmethionine (AdoMet) from methionine and ATP. The overall synthetic reaction is composed of two sequential steps, AdoMet formation and the subsequent tripolyphosphate hydrolysis which occurs prior to release of AdoMet from the enzyme. In Chloroflexus aurantiacus (strain ATCC 29366 / DSM 635 / J-10-fl), this protein is S-adenosylmethionine synthase.